Here is a 217-residue protein sequence, read N- to C-terminus: Flagellar L-ring protein 1 (217 aa).

The signal sequence occupies residues 1–16 (MTLARLAPLAALLLAA). Cysteine 17 carries N-palmitoyl cysteine lipidation. Cysteine 17 carries S-diacylglycerol cysteine lipidation.

It belongs to the FlgH family. As to quaternary structure, the basal body constitutes a major portion of the flagellar organelle and consists of four rings (L,P,S, and M) mounted on a central rod.

Its subcellular location is the cell outer membrane. The protein localises to the bacterial flagellum basal body. Functionally, assembles around the rod to form the L-ring and probably protects the motor/basal body from shearing forces during rotation. The chain is Flagellar L-ring protein 1 from Chromobacterium violaceum (strain ATCC 12472 / DSM 30191 / JCM 1249 / CCUG 213 / NBRC 12614 / NCIMB 9131 / NCTC 9757 / MK).